We begin with the raw amino-acid sequence, 363 residues long: Ribosomal RNA large subunit methyltransferase M (363 aa).

S-adenosyl-L-methionine is bound by residues S194, 227–230, D246, D266, and D284; that span reads CPGG. K313 acts as the Proton acceptor in catalysis.

Belongs to the class I-like SAM-binding methyltransferase superfamily. RNA methyltransferase RlmE family. RlmM subfamily. Monomer.

It localises to the cytoplasm. It carries out the reaction cytidine(2498) in 23S rRNA + S-adenosyl-L-methionine = 2'-O-methylcytidine(2498) in 23S rRNA + S-adenosyl-L-homocysteine + H(+). In terms of biological role, catalyzes the 2'-O-methylation at nucleotide C2498 in 23S rRNA. The chain is Ribosomal RNA large subunit methyltransferase M from Haemophilus influenzae (strain ATCC 51907 / DSM 11121 / KW20 / Rd).